A 170-amino-acid polypeptide reads, in one-letter code: Flavodoxin (170 aa).

The Flavodoxin-like domain occupies Ile-4–Lys-165.

It belongs to the flavodoxin family. The cofactor is FMN.

Its function is as follows. Low-potential electron donor to a number of redox enzymes. The polypeptide is Flavodoxin (isiB) (Picosynechococcus sp. (strain ATCC 27264 / PCC 7002 / PR-6) (Agmenellum quadruplicatum)).